The chain runs to 289 residues: Cysteine-rich venom protein Mr30 (289 aa).

Positions 1-24 (MLSTMQTVGAILMLSIVFVAGTKR) are cleaved as a signal peptide. 4-carboxyglutamate is present on Glu-33. Positions 62–184 (VRMHNVIRAT…GEDRYFVCNY (123 aa)) constitute an SCP domain.

The protein belongs to the CRISP family. In terms of processing, contains 11 disulfide bonds. In terms of tissue distribution, expressed by the venom duct.

It is found in the secreted. Has no proteolytic activity. This Conus marmoreus (Marble cone) protein is Cysteine-rich venom protein Mr30.